The following is a 250-amino-acid chain: Triosephosphate isomerase (250 aa).

Residue 9-11 (NWK) participates in substrate binding. The active-site Electrophile is His96. Glu166 serves as the catalytic Proton acceptor. Substrate-binding positions include Gly172, Ser212, and 233–234 (GG).

It belongs to the triosephosphate isomerase family. Homodimer.

The protein resides in the cytoplasm. It carries out the reaction D-glyceraldehyde 3-phosphate = dihydroxyacetone phosphate. The protein operates within carbohydrate biosynthesis; gluconeogenesis. It participates in carbohydrate degradation; glycolysis; D-glyceraldehyde 3-phosphate from glycerone phosphate: step 1/1. Functionally, involved in the gluconeogenesis. Catalyzes stereospecifically the conversion of dihydroxyacetone phosphate (DHAP) to D-glyceraldehyde-3-phosphate (G3P). In Chlorobium luteolum (strain DSM 273 / BCRC 81028 / 2530) (Pelodictyon luteolum), this protein is Triosephosphate isomerase.